Here is a 388-residue protein sequence, read N- to C-terminus: S-adenosylmethionine synthase (388 aa).

His16 serves as a coordination point for ATP. Asp18 contributes to the Mg(2+) binding site. A K(+)-binding site is contributed by Glu44. Residues Glu57 and Gln100 each coordinate L-methionine. The segment at Gln100–Arg110 is flexible loop. ATP-binding positions include Asp165–Lys167, Lys231–Phe232, Asp240, Arg246–Lys247, Ala263, and Lys267. Asp240 provides a ligand contact to L-methionine. Lys271 lines the L-methionine pocket.

It belongs to the AdoMet synthase family. In terms of assembly, homotetramer; dimer of dimers. It depends on Mg(2+) as a cofactor. K(+) is required as a cofactor.

The protein localises to the cytoplasm. The enzyme catalyses L-methionine + ATP + H2O = S-adenosyl-L-methionine + phosphate + diphosphate. It functions in the pathway amino-acid biosynthesis; S-adenosyl-L-methionine biosynthesis; S-adenosyl-L-methionine from L-methionine: step 1/1. Its function is as follows. Catalyzes the formation of S-adenosylmethionine (AdoMet) from methionine and ATP. The overall synthetic reaction is composed of two sequential steps, AdoMet formation and the subsequent tripolyphosphate hydrolysis which occurs prior to release of AdoMet from the enzyme. The chain is S-adenosylmethionine synthase from Psychrobacter arcticus (strain DSM 17307 / VKM B-2377 / 273-4).